The sequence spans 509 residues: Bifunctional purine biosynthesis protein PurH (509 aa).

An MGS-like domain is found at 1–144; it reads MKRALISVSD…KNYAAVTVVV (144 aa).

The protein belongs to the PurH family.

The catalysed reaction is (6R)-10-formyltetrahydrofolate + 5-amino-1-(5-phospho-beta-D-ribosyl)imidazole-4-carboxamide = 5-formamido-1-(5-phospho-D-ribosyl)imidazole-4-carboxamide + (6S)-5,6,7,8-tetrahydrofolate. It catalyses the reaction IMP + H2O = 5-formamido-1-(5-phospho-D-ribosyl)imidazole-4-carboxamide. It participates in purine metabolism; IMP biosynthesis via de novo pathway; 5-formamido-1-(5-phospho-D-ribosyl)imidazole-4-carboxamide from 5-amino-1-(5-phospho-D-ribosyl)imidazole-4-carboxamide (10-formyl THF route): step 1/1. Its pathway is purine metabolism; IMP biosynthesis via de novo pathway; IMP from 5-formamido-1-(5-phospho-D-ribosyl)imidazole-4-carboxamide: step 1/1. This Listeria monocytogenes serotype 4a (strain HCC23) protein is Bifunctional purine biosynthesis protein PurH.